A 500-amino-acid chain; its full sequence is Plexin domain-containing protein 1 (500 aa).

The first 18 residues, 1 to 18, serve as a signal peptide directing secretion; that stretch reads MRGELWLLVLVLREAARA. The Extracellular segment spans residues 19-426; the sequence is LSPQPGAGHD…TKGTPVHLGT (408 aa). 2 disordered regions span residues 20 to 39 and 46 to 78; these read SPQP…AAKG and RRAR…DTLP. A glycan (O-linked (Xyl...) (chondroitin sulfate) serine) is linked at serine 33. A compositionally biased stretch (basic and acidic residues) spans 47-60; it reads RARESPGHVSEPDR. N-linked (GlcNAc...) asparagine glycans are attached at residues asparagine 80 and asparagine 197. The segment at 359–379 is disordered; the sequence is FQDEDHDSASPDTSFSPYDGD. A compositionally biased stretch (polar residues) spans 368–379; it reads SPDTSFSPYDGD. Residues 427–447 traverse the membrane as a helical segment; sequence IVGIVLAVLLVAAIILAGIYI. At 448-500 the chain is on the cytoplasmic side; that stretch reads NGHPTSNAALFFIERRPHHWPAMKFRSHPDHSTYAEVEPSGHEKEGFMEAEQC. The span at 479–494 shows a compositional bias: basic and acidic residues; that stretch reads STYAEVEPSGHEKEGF. Residues 479-500 are disordered; the sequence is STYAEVEPSGHEKEGFMEAEQC.

It belongs to the plexin family. Interacts with NID1. May interact with CTTN. In terms of processing, N-glycosylated. Detected in urine (at protein level). Detected in endothelial cells from colorectal cancer, and in endothelial cells from primary cancers of the lung, liver, pancreas, breast and brain. Not detectable in endothelial cells from normal tissue. Expressed in fibrovascular membrane with increased expression in individuals with proliferative diabetic retinopathy.

The protein localises to the secreted. It localises to the cell membrane. Its subcellular location is the cell junction. It is found in the tight junction. The protein resides in the cytoplasm. Plays a critical role in endothelial cell capillary morphogenesis. The chain is Plexin domain-containing protein 1 (PLXDC1) from Homo sapiens (Human).